A 101-amino-acid polypeptide reads, in one-letter code: Small ribosomal subunit protein uS14A (101 aa).

The tract at residues 31–73 (IKSPSTTPEARVAAQSELNRQPRDASPVRVRNRDSVDGRPRGH) is disordered. The segment covering 61–70 (RNRDSVDGRP) has biased composition (basic and acidic residues).

This sequence belongs to the universal ribosomal protein uS14 family. Part of the 30S ribosomal subunit. Contacts proteins S3 and S10.

Binds 16S rRNA, required for the assembly of 30S particles and may also be responsible for determining the conformation of the 16S rRNA at the A site. The sequence is that of Small ribosomal subunit protein uS14A from Mycolicibacterium vanbaalenii (strain DSM 7251 / JCM 13017 / BCRC 16820 / KCTC 9966 / NRRL B-24157 / PYR-1) (Mycobacterium vanbaalenii).